A 391-amino-acid chain; its full sequence is Heme A synthase (391 aa).

A run of 8 helical transmembrane segments spans residues 37–57, 121–141, 152–172, 186–206, 229–249, 298–318, 332–352, and 354–374; these read IRLW…VGGL, RQLG…FLVA, LLAL…MVAS, LAVH…QALL, TTVL…VAGI, FLHR…WIFG, LLAL…LSAA, and WQVA…ILHA. Residue His300 coordinates heme. His360 is a heme binding site.

Belongs to the COX15/CtaA family. Type 2 subfamily. As to quaternary structure, interacts with CtaB. Requires heme b as cofactor.

The protein resides in the cell membrane. It carries out the reaction Fe(II)-heme o + 2 A + H2O = Fe(II)-heme a + 2 AH2. Its pathway is porphyrin-containing compound metabolism; heme A biosynthesis; heme A from heme O: step 1/1. Functionally, catalyzes the conversion of heme O to heme A by two successive hydroxylations of the methyl group at C8. The first hydroxylation forms heme I, the second hydroxylation results in an unstable dihydroxymethyl group, which spontaneously dehydrates, resulting in the formyl group of heme A. The polypeptide is Heme A synthase (Cereibacter sphaeroides (strain ATCC 17025 / ATH 2.4.3) (Rhodobacter sphaeroides)).